A 304-amino-acid chain; its full sequence is DCN1-like protein 3 (304 aa).

Disordered regions lie at residues 1-86 and 284-304; these read MGQC…AEES and EGEG…EEQT. Residue Gly-2 is the site of N-myristoyl glycine attachment. The 193-residue stretch at 86 to 278 folds into the DCUN1 domain; it reads SSLQRLEELF…LFDTFVEWEM (193 aa).

As to quaternary structure, part of a complex containing DCUN1D3, CUL3 and RBX1. Interacts (via the DCUN1 domain) with the unneddylated cullins: interacts with CUL1, CUL2, CUL3, CUL4A, CUL4B and CUL5; these interactions promote the cullin neddylation and the identity of the cullin dictates the affinity of the interaction. Interacts preferentially with CUL3; this interaction triggers the relocalization of CUL3 to the cell membrane where CUL3 is neddylated. Interacts (via DCUN1 domain) with RBX1. May also interact with regulators or subunits of cullin-RING ligases such as RNF7, ELOB and DDB1; these interactions are bridged by cullins. Interacts (via DCUN1 domain) with CAND1; this interaction is bridged by cullins and strongly inhibits cullin neddylation. These CAND-cullin-DCNL complexes can only be neddylated in the presence of a substrate adapter. Interacts (via DCUN1 domain) with the N-terminally acetylated form of UBE2M and UBE2F. Tends to be down-regulated in different type of cancers, including lung neuroendocrine carcinoma, thyroid Huerthle cell carcinoma and lung squamous cell carcinoma. Mostly expressed in testis and brain. Highly expressed in liver, bladder and renal normal tissue than their tumor tissue counterparts. Palmitoylation stabilizes DCUN1D3 at the cell membrane.

It is found in the cell membrane. Its subcellular location is the cytoplasm. The protein localises to the nucleus. The protein resides in the perinuclear region. In terms of biological role, contributes to the neddylation of all cullins by transferring NEDD8 from N-terminally acetylated NEDD8-conjugating E2s enzyme to different cullin C-terminal domain-RBX complexes and may play a role in the cell cycle progression by regulating the SCF ubiquitin E3 ligase complex, after UV damage. At the cell membrane, can promote and as well inhibit cullins neddylation. The polypeptide is DCN1-like protein 3 (Homo sapiens (Human)).